The following is a 443-amino-acid chain: uncharacterized protein (443 aa).

10 consecutive transmembrane segments (helical) span residues Val7 to Thr29, Tyr68 to Thr87, Val94 to Phe111, Val121 to Ala143, Ile150 to Cys164, Ile179 to Phe201, Leu206 to Ser225, Ile358 to Asn375, Leu382 to Gly399, and Leu409 to Ile431.

The protein resides in the cell membrane. This is an uncharacterized protein from Escherichia coli (strain K12).